Here is a 426-residue protein sequence, read N- to C-terminus: Protein TolB homolog (426 aa).

The signal sequence occupies residues 1-19; it reads MFLRSFLCLLCLLPSILYC.

This sequence belongs to the TolB family.

It localises to the periplasm. The protein is Protein TolB homolog of Chlamydia muridarum (strain MoPn / Nigg).